Reading from the N-terminus, the 495-residue chain is Putative aldehyde dehydrogenase AldA (495 aa).

212–218 (GKGSESG) provides a ligand contact to NAD(+). Catalysis depends on residues Glu-256 and Cys-290.

The protein belongs to the aldehyde dehydrogenase family.

The enzyme catalyses an aldehyde + NAD(+) + H2O = a carboxylate + NADH + 2 H(+). The polypeptide is Putative aldehyde dehydrogenase AldA (aldA) (Staphylococcus aureus (strain MRSA252)).